The sequence spans 258 residues: Phosphate import ATP-binding protein PstB (258 aa).

In terms of domain architecture, ABC transporter spans 5 to 247 (IDVSGLTAYY…ERIFSNPSVQ (243 aa)). 37 to 44 (GPSGCGKS) is an ATP binding site.

This sequence belongs to the ABC transporter superfamily. Phosphate importer (TC 3.A.1.7) family. In terms of assembly, the complex is composed of two ATP-binding proteins (PstB), two transmembrane proteins (PstC and PstA) and a solute-binding protein (PstS).

Its subcellular location is the cell membrane. The catalysed reaction is phosphate(out) + ATP + H2O = ADP + 2 phosphate(in) + H(+). Functionally, part of the ABC transporter complex PstSACB involved in phosphate import. Responsible for energy coupling to the transport system. The polypeptide is Phosphate import ATP-binding protein PstB (Streptomyces avermitilis (strain ATCC 31267 / DSM 46492 / JCM 5070 / NBRC 14893 / NCIMB 12804 / NRRL 8165 / MA-4680)).